The primary structure comprises 134 residues: Replication enhancer protein (134 aa).

It belongs to the geminiviridae replication enhancer protein family. As to quaternary structure, homooligomer. Interacts with the replication-associated protein (REP). Interacts with host proliferating cell nuclear antigen (PCNA). Interacts with host retinoblastoma-related protein 1 (RBR1), and may thereby deregulate the host cell cycle. Oligomerization and interaction with PCNA are necessary for optimal replication enhancement.

Functionally, increases viral DNA accumulation. Enhances infectivity and symptom expression. This is Replication enhancer protein from Manihot esculenta (Cassava).